The chain runs to 281 residues: Probable feruloyl esterase A (281 aa).

Residues 1 to 21 (MKNFVSMHAILLACSAGAGLA) form the signal peptide. Intrachain disulfides connect Cys-50–Cys-279, Cys-112–Cys-115, and Cys-248–Cys-255. Asp-98 is a binding site for substrate. N-linked (GlcNAc...) asparagine glycosylation is present at Asn-100. Tyr-101 provides a ligand contact to substrate. Ser-154 (nucleophile) is an active-site residue. An N-linked (GlcNAc...) asparagine glycan is attached at Asn-173. Asp-215 functions as the Charge relay system in the catalytic mechanism. His-268 contributes to the substrate binding site. The Charge relay system role is filled by His-268.

The protein belongs to the AB hydrolase superfamily. FaeA family.

It is found in the secreted. The catalysed reaction is feruloyl-polysaccharide + H2O = ferulate + polysaccharide.. Involved in degradation of plant cell walls. Hydrolyzes the feruloyl-arabinose ester bond in arabinoxylans, and the feruloyl-galactose ester bond in pectin. The polypeptide is Probable feruloyl esterase A (faeA) (Aspergillus flavus (strain ATCC 200026 / FGSC A1120 / IAM 13836 / NRRL 3357 / JCM 12722 / SRRC 167)).